Here is a 498-residue protein sequence, read N- to C-terminus: Aspartyl/glutamyl-tRNA(Asn/Gln) amidotransferase subunit B (498 aa).

The protein belongs to the GatB/GatE family. GatB subfamily. Heterotrimer of A, B and C subunits.

The catalysed reaction is L-glutamyl-tRNA(Gln) + L-glutamine + ATP + H2O = L-glutaminyl-tRNA(Gln) + L-glutamate + ADP + phosphate + H(+). The enzyme catalyses L-aspartyl-tRNA(Asn) + L-glutamine + ATP + H2O = L-asparaginyl-tRNA(Asn) + L-glutamate + ADP + phosphate + 2 H(+). In terms of biological role, allows the formation of correctly charged Asn-tRNA(Asn) or Gln-tRNA(Gln) through the transamidation of misacylated Asp-tRNA(Asn) or Glu-tRNA(Gln) in organisms which lack either or both of asparaginyl-tRNA or glutaminyl-tRNA synthetases. The reaction takes place in the presence of glutamine and ATP through an activated phospho-Asp-tRNA(Asn) or phospho-Glu-tRNA(Gln). This is Aspartyl/glutamyl-tRNA(Asn/Gln) amidotransferase subunit B from Caulobacter vibrioides (strain ATCC 19089 / CIP 103742 / CB 15) (Caulobacter crescentus).